A 97-amino-acid polypeptide reads, in one-letter code: Aspartyl/glutamyl-tRNA(Asn/Gln) amidotransferase subunit C (97 aa).

It belongs to the GatC family. Heterotrimer of A, B and C subunits.

The catalysed reaction is L-glutamyl-tRNA(Gln) + L-glutamine + ATP + H2O = L-glutaminyl-tRNA(Gln) + L-glutamate + ADP + phosphate + H(+). The enzyme catalyses L-aspartyl-tRNA(Asn) + L-glutamine + ATP + H2O = L-asparaginyl-tRNA(Asn) + L-glutamate + ADP + phosphate + 2 H(+). Functionally, allows the formation of correctly charged Asn-tRNA(Asn) or Gln-tRNA(Gln) through the transamidation of misacylated Asp-tRNA(Asn) or Glu-tRNA(Gln) in organisms which lack either or both of asparaginyl-tRNA or glutaminyl-tRNA synthetases. The reaction takes place in the presence of glutamine and ATP through an activated phospho-Asp-tRNA(Asn) or phospho-Glu-tRNA(Gln). The protein is Aspartyl/glutamyl-tRNA(Asn/Gln) amidotransferase subunit C of Prochlorococcus marinus (strain MIT 9515).